We begin with the raw amino-acid sequence, 149 residues long: Large ribosomal subunit protein uL13 (149 aa).

This sequence belongs to the universal ribosomal protein uL13 family. As to quaternary structure, part of the 50S ribosomal subunit.

Its function is as follows. This protein is one of the early assembly proteins of the 50S ribosomal subunit, although it is not seen to bind rRNA by itself. It is important during the early stages of 50S assembly. This chain is Large ribosomal subunit protein uL13, found in Borrelia recurrentis (strain A1).